A 174-amino-acid chain; its full sequence is Ribosome maturation factor RimM (174 aa).

The PRC barrel domain maps to 98-171 (EDEFYFHEII…KIKIHVMEGL (74 aa)).

The protein belongs to the RimM family. As to quaternary structure, binds ribosomal protein uS19.

It is found in the cytoplasm. In terms of biological role, an accessory protein needed during the final step in the assembly of 30S ribosomal subunit, possibly for assembly of the head region. Essential for efficient processing of 16S rRNA. May be needed both before and after RbfA during the maturation of 16S rRNA. It has affinity for free ribosomal 30S subunits but not for 70S ribosomes. This chain is Ribosome maturation factor RimM, found in Bacillus velezensis (strain DSM 23117 / BGSC 10A6 / LMG 26770 / FZB42) (Bacillus amyloliquefaciens subsp. plantarum).